Consider the following 282-residue polypeptide: Pantothenate synthetase (282 aa).

26–33 (MGNLHEGH) is an ATP binding site. His-33 functions as the Proton donor in the catalytic mechanism. Gln-57 provides a ligand contact to (R)-pantoate. Gln-57 contributes to the beta-alanine binding site. Residue 144–147 (GKKD) participates in ATP binding. Residue Gln-150 participates in (R)-pantoate binding. ATP-binding positions include Ile-173 and 181-184 (LSSR).

Belongs to the pantothenate synthetase family. As to quaternary structure, homodimer.

The protein localises to the cytoplasm. It carries out the reaction (R)-pantoate + beta-alanine + ATP = (R)-pantothenate + AMP + diphosphate + H(+). Its pathway is cofactor biosynthesis; (R)-pantothenate biosynthesis; (R)-pantothenate from (R)-pantoate and beta-alanine: step 1/1. Functionally, catalyzes the condensation of pantoate with beta-alanine in an ATP-dependent reaction via a pantoyl-adenylate intermediate. The sequence is that of Pantothenate synthetase from Cupriavidus necator (strain ATCC 17699 / DSM 428 / KCTC 22496 / NCIMB 10442 / H16 / Stanier 337) (Ralstonia eutropha).